The chain runs to 337 residues: Tetraacyldisaccharide 4'-kinase (337 aa).

Residue 72 to 79 (TVGGSGKT) coordinates ATP.

This sequence belongs to the LpxK family.

The enzyme catalyses a lipid A disaccharide + ATP = a lipid IVA + ADP + H(+). Its pathway is glycolipid biosynthesis; lipid IV(A) biosynthesis; lipid IV(A) from (3R)-3-hydroxytetradecanoyl-[acyl-carrier-protein] and UDP-N-acetyl-alpha-D-glucosamine: step 6/6. Functionally, transfers the gamma-phosphate of ATP to the 4'-position of a tetraacyldisaccharide 1-phosphate intermediate (termed DS-1-P) to form tetraacyldisaccharide 1,4'-bis-phosphate (lipid IVA). This is Tetraacyldisaccharide 4'-kinase from Shewanella sediminis (strain HAW-EB3).